A 399-amino-acid polypeptide reads, in one-letter code: 1-deoxy-D-xylulose 5-phosphate reductoisomerase (399 aa).

7 residues coordinate NADPH: Thr11, Gly12, Ser13, Ile14, Gly37, Asn39, and Asn125. Position 126 (Lys126) interacts with 1-deoxy-D-xylulose 5-phosphate. Glu127 lines the NADPH pocket. Asp151 contacts Mn(2+). Residues Ser152, Glu153, Ser177, and His200 each contribute to the 1-deoxy-D-xylulose 5-phosphate site. Glu153 provides a ligand contact to Mn(2+). Gly206 serves as a coordination point for NADPH. 1-deoxy-D-xylulose 5-phosphate contacts are provided by Ser213, Asn218, Lys219, and Glu222. Position 222 (Glu222) interacts with Mn(2+).

The protein belongs to the DXR family. Requires Mg(2+) as cofactor. It depends on Mn(2+) as a cofactor.

It carries out the reaction 2-C-methyl-D-erythritol 4-phosphate + NADP(+) = 1-deoxy-D-xylulose 5-phosphate + NADPH + H(+). It functions in the pathway isoprenoid biosynthesis; isopentenyl diphosphate biosynthesis via DXP pathway; isopentenyl diphosphate from 1-deoxy-D-xylulose 5-phosphate: step 1/6. Its function is as follows. Catalyzes the NADPH-dependent rearrangement and reduction of 1-deoxy-D-xylulose-5-phosphate (DXP) to 2-C-methyl-D-erythritol 4-phosphate (MEP). This is 1-deoxy-D-xylulose 5-phosphate reductoisomerase from Nostoc sp. (strain PCC 7120 / SAG 25.82 / UTEX 2576).